We begin with the raw amino-acid sequence, 604 residues long: 3-hydroxy-3-methylglutaryl-coenzyme A reductase 2 (604 aa).

2 consecutive transmembrane segments (helical) span residues 47-67 and 91-111; these read LPLY…MYFL and AIVS…IGFV. The tract at residues 112–188 is linker; the sequence is QTFVARGNND…APLVTPAASE (77 aa). The N-linked (GlcNAc...) asparagine glycan is linked to asparagine 120. The interval 189 to 604 is catalytic; sequence EDEEIIKSVV…STKDVTKASS (416 aa). Catalysis depends on glutamate 283, which acts as the Charge relay system. Residue asparagine 347 is glycosylated (N-linked (GlcNAc...) asparagine). The active-site Charge relay system is lysine 415. Asparagine 460 carries N-linked (GlcNAc...) asparagine glycosylation. The active-site Charge relay system is aspartate 491. Histidine 589 serves as the catalytic Proton donor. N-linked (GlcNAc...) asparagine glycosylation is present at asparagine 593.

It belongs to the HMG-CoA reductase family.

Its subcellular location is the endoplasmic reticulum membrane. The enzyme catalyses (R)-mevalonate + 2 NADP(+) + CoA = (3S)-3-hydroxy-3-methylglutaryl-CoA + 2 NADPH + 2 H(+). Its pathway is metabolic intermediate biosynthesis; (R)-mevalonate biosynthesis; (R)-mevalonate from acetyl-CoA: step 3/3. In terms of biological role, catalyzes the synthesis of mevalonate. The specific precursor of all isoprenoid compounds present in plants. The chain is 3-hydroxy-3-methylglutaryl-coenzyme A reductase 2 (HMGR2) from Capsicum annuum (Capsicum pepper).